The chain runs to 395 residues: Syncephapepsin (395 aa).

An N-terminal signal peptide occupies residues 1–19 (MKFSLALLATVALATISQA). Residues 20–71 (APVEKQVAGKPFQLVKNPHYQANATRAIFRAEKKYARHTAIPEQGKTIVKSA) constitute a propeptide, activation peptide. Residues 89–391 (YYATVSVGTP…NQGVPEVQIA (303 aa)) enclose the Peptidase A1 domain. D107 is a catalytic residue. A disulfide bridge connects residues C120 and C123. D288 is an active-site residue. Residues C322 and C355 are joined by a disulfide bond.

The protein belongs to the peptidase A1 family. As to quaternary structure, monomer.

Functionally, hydrolysis of proteins with a broad specificity. Residues recognized to be cleaved were primarily those of trypsin and chymotrypsin and Lys was the most susceptible. This Syncephalastrum racemosum (Filamentous fungus) protein is Syncephapepsin (SPSR).